Reading from the N-terminus, the 823-residue chain is Protein FAM193B (823 aa).

4 disordered regions span residues 1–78, 158–191, 209–281, and 381–409; these read MTRR…TSQS, SCKS…NSGD, SPHS…PTTP, and CEAD…HQRD. The span at 26–36 shows a compositional bias: pro residues; it reads PQAPEPPPPPS. Positions 52 to 64 are enriched in basic and acidic residues; the sequence is PYRDDPREEDEPK. Composition is skewed to low complexity over residues 168–184 and 263–281; these read SHSS…SSSS and SHPG…PTTP. Positions 382-393 are enriched in acidic residues; it reads EADEGLGEEEDS. Residues 422–484 are a coiled coil; the sequence is GHNAEKEKAQ…RLQEIKNTVK (63 aa). Disordered stretches follow at residues 503-583 and 599-775; these read FSKE…PENG and WVKT…PKDM. 2 stretches are compositionally biased toward polar residues: residues 516–526 and 641–657; these read LAPSNPSGSSE and QGNQ…SQSP. Phosphoserine is present on residues serine 694, serine 706, and serine 813.

This sequence belongs to the FAM193 family.

It localises to the cytoplasm. Its subcellular location is the nucleus. In Bos taurus (Bovine), this protein is Protein FAM193B (FAM193B).